We begin with the raw amino-acid sequence, 635 residues long: Threonine--tRNA ligase (635 aa).

A TGS domain is found at 1–58; the sequence is MIRVICDNETFELPTGSTAADFASKIKNSHYFAGVVINDQIKDLSTTLSEGDVLKFVT. The segment at 237–528 is catalytic; the sequence is DHRVLGTKLD…LIEHFKGRFP (292 aa). Zn(2+)-binding residues include Cys328, His379, and His505.

The protein belongs to the class-II aminoacyl-tRNA synthetase family. Homodimer. Zn(2+) is required as a cofactor.

Its subcellular location is the cytoplasm. The catalysed reaction is tRNA(Thr) + L-threonine + ATP = L-threonyl-tRNA(Thr) + AMP + diphosphate + H(+). Functionally, catalyzes the attachment of threonine to tRNA(Thr) in a two-step reaction: L-threonine is first activated by ATP to form Thr-AMP and then transferred to the acceptor end of tRNA(Thr). Also edits incorrectly charged L-seryl-tRNA(Thr). In Chlamydia felis (strain Fe/C-56) (Chlamydophila felis), this protein is Threonine--tRNA ligase.